The primary structure comprises 613 residues: Dihydroxy-acid dehydratase (613 aa).

Asp81 lines the Mg(2+) pocket. Cys122 serves as a coordination point for [2Fe-2S] cluster. 2 residues coordinate Mg(2+): Asp123 and Lys124. Position 124 is an N6-carboxylysine (Lys124). Cys195 is a [2Fe-2S] cluster binding site. Glu491 serves as a coordination point for Mg(2+). Ser517 (proton acceptor) is an active-site residue.

It belongs to the IlvD/Edd family. In terms of assembly, homodimer. [2Fe-2S] cluster serves as cofactor. The cofactor is Mg(2+).

It catalyses the reaction (2R)-2,3-dihydroxy-3-methylbutanoate = 3-methyl-2-oxobutanoate + H2O. The catalysed reaction is (2R,3R)-2,3-dihydroxy-3-methylpentanoate = (S)-3-methyl-2-oxopentanoate + H2O. The protein operates within amino-acid biosynthesis; L-isoleucine biosynthesis; L-isoleucine from 2-oxobutanoate: step 3/4. It participates in amino-acid biosynthesis; L-valine biosynthesis; L-valine from pyruvate: step 3/4. Functionally, functions in the biosynthesis of branched-chain amino acids. Catalyzes the dehydration of (2R,3R)-2,3-dihydroxy-3-methylpentanoate (2,3-dihydroxy-3-methylvalerate) into 2-oxo-3-methylpentanoate (2-oxo-3-methylvalerate) and of (2R)-2,3-dihydroxy-3-methylbutanoate (2,3-dihydroxyisovalerate) into 2-oxo-3-methylbutanoate (2-oxoisovalerate), the penultimate precursor to L-isoleucine and L-valine, respectively. This chain is Dihydroxy-acid dehydratase, found in Hyphomonas neptunium (strain ATCC 15444).